Here is a 431-residue protein sequence, read N- to C-terminus: Isocitrate lyase (431 aa).

Residues Met1–Pro21 form a disordered region. Ser93–Trp95 provides a ligand contact to substrate. Position 155 (Asp155) interacts with Mg(2+). The active-site Proton acceptor is the Cys193. Residues Gly194–His195, Arg230, Asn315–Ser319, and Thr349 contribute to the substrate site.

The protein belongs to the isocitrate lyase/PEP mutase superfamily. Isocitrate lyase family. As to quaternary structure, homotetramer. It depends on Mg(2+) as a cofactor.

It catalyses the reaction D-threo-isocitrate = glyoxylate + succinate. Its pathway is carbohydrate metabolism; glyoxylate cycle; (S)-malate from isocitrate: step 1/2. Its function is as follows. Involved in the metabolic adaptation in response to environmental changes. Catalyzes the reversible formation of succinate and glyoxylate from isocitrate, a key step of the glyoxylate cycle, which operates as an anaplerotic route for replenishing the tricarboxylic acid cycle during growth on fatty acid substrates. The protein is Isocitrate lyase (aceA) of Corynebacterium efficiens (strain DSM 44549 / YS-314 / AJ 12310 / JCM 11189 / NBRC 100395).